The primary structure comprises 250 residues: Protein orai-2 (250 aa).

The next 4 helical transmembrane spans lie at 66 to 83 (TSALLSGFAMVAMVEVQL), 94 to 114 (LIAFSACTTVLVAVHLFALLI), 148 to 168 (LAWGFSTVLGILLFLAEVVLL), and 192 to 212 (AALVSTIIMVPVGLIFVVFTI).

It belongs to the Orai family. As to quaternary structure, oligomerizes in homomeric and heteromeric ORAI complexes. Native CRAC channels most likely consist of hexameric ORAI heteromers, implying that diverse ORAI1, ORAI2 and ORAI3 subunit combinations with distinct biophysical properties can operate in a cell-type specific way. Interacts with STIM1; this regulates channel activity. Interacts with CRACR2A/EFCAB4B.

The protein resides in the cell membrane. It carries out the reaction Ca(2+)(in) = Ca(2+)(out). Its activity is regulated as follows. CRAC channels are regulated by fast Ca(2+)-dependent inactivation (FCDI), a mechanism that limits Ca(2+) influx and cell toxicity. ORAI2 channels display prominent FCDI. Inhibited by lanthanides such as Gd(3+) ions. In terms of biological role, pore-forming subunit of inward rectifying Ca(2+) release-activated Ca(2+) (CRAC) channels. Assembles with ORAI1 and ORAI3 to form hexameric CRAC channels that mediate Ca(2+) influx upon depletion of endoplasmic reticulum Ca(2+) store and channel activation by Ca(2+) sensor STIM1, a process known as store-operated Ca(2+) entry (SOCE). Various pore subunit combinations may account for distinct CRAC channel spatiotemporal and cell-type specific dynamics. ORAI1 mainly contributes to the generation of Ca(2+) plateaus involved in sustained Ca(2+) entry and is dispensable for cytosolic Ca(2+) oscillations, whereas ORAI2 and ORAI3 generate oscillatory patterns. CRAC channels assemble in Ca(2+) signaling microdomains where Ca(2+) influx is coupled to calmodulin and calcineurin signaling and activation of NFAT transcription factors recruited to ORAI1 via AKAP5. CRAC channels are the main pathway for Ca(2+) influx in T cells and promote the immune response to pathogens by activating NFAT-dependent cytokine and chemokine transcription. The sequence is that of Protein orai-2 (Orai2) from Mus musculus (Mouse).